Consider the following 317-residue polypeptide: Protoheme IX farnesyltransferase (317 aa).

8 helical membrane passes run 39–59 (VLYL…GGIN), 60–80 (PILG…AGAI), 109–129 (GALA…WLAT), 131–151 (LLAA…YTMW), 160–180 (IVIG…AATG), 184–204 (LLPV…FWAL), 249–269 (VLHL…LAFV), and 297–317 (FKFS…DHLV).

It belongs to the UbiA prenyltransferase family. Protoheme IX farnesyltransferase subfamily.

Its subcellular location is the cell inner membrane. It carries out the reaction heme b + (2E,6E)-farnesyl diphosphate + H2O = Fe(II)-heme o + diphosphate. It functions in the pathway porphyrin-containing compound metabolism; heme O biosynthesis; heme O from protoheme: step 1/1. Functionally, converts heme B (protoheme IX) to heme O by substitution of the vinyl group on carbon 2 of heme B porphyrin ring with a hydroxyethyl farnesyl side group. The protein is Protoheme IX farnesyltransferase of Acidiphilium cryptum (strain JF-5).